The chain runs to 158 residues: Snaclec mucetin subunit alpha (158 aa).

Residues 1-23 (MGRFTFVSFGLLVVFLSLSGTGA) form the signal peptide. Cystine bridges form between Cys-27–Cys-38, Cys-55–Cys-152, and Cys-127–Cys-144. Residues 34-153 (YDRYCYQAFS…CGRENPFVCK (120 aa)) form the C-type lectin domain.

The protein belongs to the snaclec family. In terms of assembly, dimer and tetramer of heterodimers of alpha and beta subunits ((alphabeta)(2) and (alphabeta)(4)); disulfide-linked. These two multimeric forms are found. The complex is glycosylated. Expressed by the venom gland.

It is found in the secreted. Its function is as follows. Potent platelet activator that acts via GPIb (GP1BA/GP1BB). After activation by the toxin, the receptor is redistributed on platelet surface thanks to cytoskeletal translocation. The indirect activation of integrin alpha-IIb/beta-3 (ITGA2B/ITGB3) also induced by the toxin is downstream the cytoskeletal translocation of GPIb. The polypeptide is Snaclec mucetin subunit alpha (Protobothrops mucrosquamatus (Taiwan habu)).